The primary structure comprises 228 residues: Acyl-protein thioesterase 1 (228 aa).

Active-site charge relay system residues include Ser-119, Asp-174, and His-208.

This sequence belongs to the AB hydrolase superfamily. AB hydrolase 2 family.

The protein resides in the cytoplasm. Its subcellular location is the nucleus. It carries out the reaction S-hexadecanoyl-L-cysteinyl-[protein] + H2O = L-cysteinyl-[protein] + hexadecanoate + H(+). In terms of biological role, hydrolyzes fatty acids from S-acylated cysteine residues in proteins with a strong preference for palmitoylated G-alpha proteins over other acyl substrates. Mediates the deacylation of G-alpha proteins such as GPA1 in vivo, but has weak or no activity toward palmitoylated Ras proteins. Has weak lysophospholipase activity in vitro; however such activity may not exist in vivo. This is Acyl-protein thioesterase 1 from Kluyveromyces lactis (strain ATCC 8585 / CBS 2359 / DSM 70799 / NBRC 1267 / NRRL Y-1140 / WM37) (Yeast).